Consider the following 628-residue polypeptide: Modular serine protease (628 aa).

Positions 1-25 are cleaved as a signal peptide; the sequence is MQLISFLSNPLFFCALLLKFRTIFA. LDL-receptor class A domains are found at residues 26–64, 69–107, 122–163, and 166–204; these read ACDS…LTCV, HCTK…LRCG, NCKE…ELCG, and ECPA…LLCN. 12 disulfides stabilise this stretch: Cys27-Cys39, Cys34-Cys52, Cys46-Cys63, Cys70-Cys82, Cys77-Cys95, Cys89-Cys106, Cys123-Cys135, Cys130-Cys149, Cys143-Cys162, Cys167-Cys179, Cys174-Cys192, and Cys186-Cys203. N-linked (GlcNAc...) asparagine glycosylation occurs at Asn36. An N-linked (GlcNAc...) asparagine glycan is attached at Asn204. Sushi domains follow at residues 222–285 and 300–356; these read LGCP…KCVK and ALCT…RCEQ. Cystine bridges form between Cys224/Cys270, Cys256/Cys283, Cys302/Cys341, and Cys326/Cys354. Residues 369-621 form the Peptidase S1 domain; that stretch reads SSGGYTINNT…FEDMILNAMN (253 aa). Asn376 carries N-linked (GlcNAc...) asparagine glycosylation. The cysteines at positions 399 and 415 are disulfide-linked. Residues His414, Asp472, and Ser563 each act as charge relay system in the active site. The N-linked (GlcNAc...) asparagine glycan is linked to Asn621.

It belongs to the peptidase S1 family. May be proteolytically cleaved via an autocatalytic mechanism.

Its subcellular location is the secreted. Functionally, serine protease that plays a key role in innate immunity by activating the Toll pathway in response to infection with Gram-positive bacteria and fungi. During Gram-positive infection, acts downstream of PGRP-SA and upstream of Grass and Spz, and therefore appears to function in a pathway that links detection of Gram-positive lysine-type peptidoglycans to Toll activation. Functions in a separate pathway to the psh-mediated activation of the Toll pathway. In Drosophila melanogaster (Fruit fly), this protein is Modular serine protease.